A 169-amino-acid chain; its full sequence is Mediator of RNA polymerase II transcription subunit 28 (169 aa).

Residues Met1–Leu35 are disordered. A coiled-coil region spans residues Glu99 to Ile137.

The protein belongs to the Mediator complex subunit 28 family. Component of the Mediator complex.

The protein localises to the nucleus. In terms of biological role, component of the Mediator complex, a coactivator involved in the regulated transcription of nearly all RNA polymerase II-dependent genes. Mediator functions as a bridge to convey information from gene-specific regulatory proteins to the basal RNA polymerase II transcription machinery. Mediator is recruited to promoters by direct interactions with regulatory proteins and serves as a scaffold for the assembly of a functional preinitiation complex with RNA polymerase II and the general transcription factors. The polypeptide is Mediator of RNA polymerase II transcription subunit 28 (med28) (Xenopus tropicalis (Western clawed frog)).